The sequence spans 122 residues: U7 snRNA-associated Sm-like protein LSm10 (122 aa).

Residues 16-88 (SLIILLQGLQ…VRYVHIPDGV (73 aa)) enclose the Sm domain.

Belongs to the snRNP Sm proteins family. As to quaternary structure, component of the heptameric ring U7 snRNP complex, or U7 Sm protein core complex, at least composed of LSM10, LSM11, SNRPB, SNRPD3, SNRPE, SNRPF, SNRPG and U7 snRNA. Formation of the U7 snRNP is an ATP-dependent process mediated by a specialized SMN complex containing at least the Sm protein core complex and additionally, the U7-specific LSM10 and LSM11 proteins. Interacts with CLNS1A and SMN. In terms of processing, not methylated. Methylation is not necessary for interaction with SMN.

It localises to the nucleus. Its function is as follows. Appears to function in the U7 snRNP complex that is involved in histone 3'-end processing. Increases U7 snRNA levels but not histone 3'-end pre-mRNA processing activity, when overexpressed. Required for cell cycle progression from G1 to S phases. Binds specifically to U7 snRNA. Binds to the downstream cleavage product (DCP) of histone pre-mRNA. This Mus musculus (Mouse) protein is U7 snRNA-associated Sm-like protein LSm10 (Lsm10).